Here is a 207-residue protein sequence, read N- to C-terminus: Guanylate kinase (207 aa).

Residues 4–184 (GTLYIVSAPS…AQMDFRSIIR (181 aa)) enclose the Guanylate kinase-like domain. 11-18 (APSGAGKS) contacts ATP.

Belongs to the guanylate kinase family.

Its subcellular location is the cytoplasm. The catalysed reaction is GMP + ATP = GDP + ADP. In terms of biological role, essential for recycling GMP and indirectly, cGMP. This is Guanylate kinase from Aliivibrio fischeri (strain ATCC 700601 / ES114) (Vibrio fischeri).